The chain runs to 126 residues: Large-conductance mechanosensitive channel (126 aa).

2 helical membrane-spanning segments follow: residues 8-28 (FAMR…AAFT) and 70-90 (IQQI…VKVI).

Belongs to the MscL family. In terms of assembly, homopentamer.

Its subcellular location is the cell membrane. Its function is as follows. Channel that opens in response to stretch forces in the membrane lipid bilayer. May participate in the regulation of osmotic pressure changes within the cell. The chain is Large-conductance mechanosensitive channel from Exiguobacterium sp. (strain ATCC BAA-1283 / AT1b).